We begin with the raw amino-acid sequence, 118 residues long: YGPGVRVVVHQNQRLGYRNNGIVKTAVMRVFDGRANSYVNKHPAGQPYLRMPIWTPGVRVHQNTDLGYRKNAFREYMRWMGKSCALNVRERYTLNPDQRRFLNIPGARMPIRTPGAFR.

In Tegula pfeifferi (Pfeiffer's top shell), this protein is Vitelline coat lysin.